The primary structure comprises 429 residues: Glutamate-1-semialdehyde 2,1-aminomutase 2 (429 aa).

Lys268 carries the post-translational modification N6-(pyridoxal phosphate)lysine.

This sequence belongs to the class-III pyridoxal-phosphate-dependent aminotransferase family. HemL subfamily. As to quaternary structure, homodimer. Pyridoxal 5'-phosphate is required as a cofactor.

It is found in the cytoplasm. The enzyme catalyses (S)-4-amino-5-oxopentanoate = 5-aminolevulinate. The protein operates within porphyrin-containing compound metabolism; protoporphyrin-IX biosynthesis; 5-aminolevulinate from L-glutamyl-tRNA(Glu): step 2/2. In Staphylococcus aureus (strain bovine RF122 / ET3-1), this protein is Glutamate-1-semialdehyde 2,1-aminomutase 2.